The sequence spans 159 residues: Ribosomal RNA large subunit methyltransferase H (159 aa).

Residues L76, G108, and 127-132 (FGRLTY) contribute to the S-adenosyl-L-methionine site.

It belongs to the RNA methyltransferase RlmH family. As to quaternary structure, homodimer.

It localises to the cytoplasm. The catalysed reaction is pseudouridine(1915) in 23S rRNA + S-adenosyl-L-methionine = N(3)-methylpseudouridine(1915) in 23S rRNA + S-adenosyl-L-homocysteine + H(+). Its function is as follows. Specifically methylates the pseudouridine at position 1915 (m3Psi1915) in 23S rRNA. This Enterococcus faecalis (strain ATCC 700802 / V583) protein is Ribosomal RNA large subunit methyltransferase H.